Here is a 206-residue protein sequence, read N- to C-terminus: Holliday junction branch migration complex subunit RuvA (206 aa).

The domain I stretch occupies residues 1–62; it reads MYDYLKGLIT…EDAQVLYGFP (62 aa). Residues 63 to 141 are domain II; the sequence is NLDQRELFRK…SLLETIELPS (79 aa). The segment at 142–152 is flexible linker; the sequence is TEDELPLFGVH. A domain III region spans residues 153-206; the sequence is PYKHELEEAILALAALGYSEKELEKIRPLLEDNDKLETTDAYMKQALQLLLKLK.

Belongs to the RuvA family. Homotetramer. Forms an RuvA(8)-RuvB(12)-Holliday junction (HJ) complex. HJ DNA is sandwiched between 2 RuvA tetramers; dsDNA enters through RuvA and exits via RuvB. An RuvB hexamer assembles on each DNA strand where it exits the tetramer. Each RuvB hexamer is contacted by two RuvA subunits (via domain III) on 2 adjacent RuvB subunits; this complex drives branch migration. In the full resolvosome a probable DNA-RuvA(4)-RuvB(12)-RuvC(2) complex forms which resolves the HJ.

The protein localises to the cytoplasm. In terms of biological role, the RuvA-RuvB-RuvC complex processes Holliday junction (HJ) DNA during genetic recombination and DNA repair, while the RuvA-RuvB complex plays an important role in the rescue of blocked DNA replication forks via replication fork reversal (RFR). RuvA specifically binds to HJ cruciform DNA, conferring on it an open structure. The RuvB hexamer acts as an ATP-dependent pump, pulling dsDNA into and through the RuvAB complex. HJ branch migration allows RuvC to scan DNA until it finds its consensus sequence, where it cleaves and resolves the cruciform DNA. The chain is Holliday junction branch migration complex subunit RuvA from Lysinibacillus sphaericus (strain C3-41).